The primary structure comprises 165 residues: RNA pyrophosphohydrolase (165 aa).

Residues 6–149 (GYRPNVGIII…KQSVYHQALT (144 aa)) enclose the Nudix hydrolase domain. The short motif at 38–59 (GGVRENETPQQAVFRELKEEVG) is the Nudix box element.

The protein belongs to the Nudix hydrolase family. RppH subfamily. The cofactor is a divalent metal cation.

Its function is as follows. Accelerates the degradation of transcripts by removing pyrophosphate from the 5'-end of triphosphorylated RNA, leading to a more labile monophosphorylated state that can stimulate subsequent ribonuclease cleavage. This Hydrogenovibrio crunogenus (strain DSM 25203 / XCL-2) (Thiomicrospira crunogena) protein is RNA pyrophosphohydrolase.